A 349-amino-acid polypeptide reads, in one-letter code: Magnesium-protoporphyrin IX monomethyl ester [oxidative] cyclase (349 aa).

The protein belongs to the AcsF family. Requires Fe cation as cofactor.

The protein resides in the plastid. The protein localises to the chloroplast. The catalysed reaction is Mg-protoporphyrin IX 13-monomethyl ester + 3 NADPH + 3 O2 + 2 H(+) = 3,8-divinyl protochlorophyllide a + 3 NADP(+) + 5 H2O. The protein operates within porphyrin-containing compound metabolism; chlorophyll biosynthesis (light-independent). Catalyzes the formation of the isocyclic ring in chlorophyll biosynthesis. Mediates the cyclase reaction, which results in the formation of divinylprotochlorophyllide (Pchlide) characteristic of all chlorophylls from magnesium-protoporphyrin IX 13-monomethyl ester (MgPMME). The polypeptide is Magnesium-protoporphyrin IX monomethyl ester [oxidative] cyclase (Porphyra purpurea (Red seaweed)).